Here is a 309-residue protein sequence, read N- to C-terminus: MAMVERPRPEWASYHNCNSNSCQDLGNSVLLLLGLIICINISINIVTLLWSRFRGVLYQVFHDTICEKEAPKSSLLRKQTQPPKKQSSPAVHLRCTMDPVMMTVSPPPAHRHRRRGSPTRCAHCPVAWAPDTDDEKPHQYPAICSYHWDVPEDWEGFQHTQGTWVPWSQDAPESPPQTIRFQPTVEERPLKTGIWSELGLRAYVYPVNPPPPSPEAPSHKNGGEGAVPEAEAAQYQPVPAPTLGPAVIPEFSRHRSSGRIVYDARDMRRRLRELTREVEALSGCYPLASGSSTAEETSKNWVYRSLTGR.

The helical transmembrane segment at Val29–Leu49 threads the bilayer. Residues Pro209–Glu231 are disordered. The stretch at Arg259–Tyr285 forms a coiled coil.

Its subcellular location is the membrane. It localises to the cytoplasm. Required for proper cytoplasm removal during spermatogenesis. The chain is Spermatid maturation protein 1 (SPEM1) from Homo sapiens (Human).